The following is a 109-amino-acid chain: uncharacterized protein (109 aa).

The disordered stretch occupies residues 77–98 (TRTGHAYPRFTRPSFPSCNRNG).

This is an uncharacterized protein from Homo sapiens (Human).